A 206-amino-acid polypeptide reads, in one-letter code: GCN5-like protein acetyltransferase Rv2170 (206 aa).

Residues 44–205 enclose the N-acetyltransferase domain; sequence EHIRRRGWQA…AFAILGRTLP (162 aa). Tyrosine 176 (proton donor) is an active-site residue.

The protein belongs to the acetyltransferase family.

It catalyses the reaction L-lysyl-[protein] + acetyl-CoA = N(6)-acetyl-L-lysyl-[protein] + CoA + H(+). The enzyme catalyses propanoyl-CoA + L-lysyl-[protein] = N(6)-propanoyl-L-lysyl-[protein] + CoA + H(+). The catalysed reaction is succinyl-CoA + L-lysyl-[protein] = N(6)-succinyl-L-lysyl-[protein] + CoA + H(+). Its function is as follows. Acetyltransferase involved in the post-translational regulation of the central metabolic enzyme isocitrate dehydrogenase 1 (ICDH-1) through lysine acetylation. Catalyzes the acetylation of ICDH-1 at Lys-30 and Lys-129, using acetyl-CoA as a donor, leading to a reduction of ICDH-1 enzyme activity. Can also use propionyl-CoA and succinyl-CoA as donors. Cannot act on the isocitrate dehydrogenase 2 (ICDH-2). Might play a role in regulating the TCA cycle and methylcitrate cycle when M.tuberculosis utilizes fatty acid as carbon source. Functionally, in addition, it can acetylate the amino group of isoniazid (INH), one of the first-line drugs used for the treatment of tuberculosis, thereby canceling out the drug toxicity. Acts by catalyzing the transfer of an acetyl group from acetyl-CoA to INH. Following acetylation, INH is broken down into isonicotinic acid and acetylhydrazine. M.smegmatis and M.tuberculosis H37Ra strains overexpressing Rv2170 are resistant to INH. Has little or no acetyltransferase activity with other antibiotics such as streptomycin, neomycin, kanamycin, amikacin, apramycin and gentamicin. The protein is GCN5-like protein acetyltransferase Rv2170 of Mycobacterium tuberculosis (strain ATCC 25618 / H37Rv).